Reading from the N-terminus, the 141-residue chain is Putative nickel-responsive regulator (141 aa).

Ni(2+)-binding residues include His-80, His-91, His-93, and Cys-99.

The protein belongs to the transcriptional regulatory CopG/NikR family. Requires Ni(2+) as cofactor.

Functionally, transcriptional regulator. The protein is Putative nickel-responsive regulator of Methanococcus maripaludis (strain DSM 14266 / JCM 13030 / NBRC 101832 / S2 / LL).